Consider the following 214-residue polypeptide: Holliday junction branch migration complex subunit RuvA (214 aa).

Residues 1 to 63 are domain I; the sequence is MISSLRGTVL…EDSLTLFGFP (63 aa). The domain II stretch occupies residues 64–139; the sequence is GPDELRAFEL…KLFVTQPRAR (76 aa). The segment at 139-143 is flexible linker; that stretch reads RSATS. Residues 144–214 are domain III; sequence AASTVTADVV…AAPTGQAADR (71 aa).

It belongs to the RuvA family. As to quaternary structure, homotetramer. Forms an RuvA(8)-RuvB(12)-Holliday junction (HJ) complex. HJ DNA is sandwiched between 2 RuvA tetramers; dsDNA enters through RuvA and exits via RuvB. An RuvB hexamer assembles on each DNA strand where it exits the tetramer. Each RuvB hexamer is contacted by two RuvA subunits (via domain III) on 2 adjacent RuvB subunits; this complex drives branch migration. In the full resolvosome a probable DNA-RuvA(4)-RuvB(12)-RuvC(2) complex forms which resolves the HJ.

It localises to the cytoplasm. Functionally, the RuvA-RuvB-RuvC complex processes Holliday junction (HJ) DNA during genetic recombination and DNA repair, while the RuvA-RuvB complex plays an important role in the rescue of blocked DNA replication forks via replication fork reversal (RFR). RuvA specifically binds to HJ cruciform DNA, conferring on it an open structure. The RuvB hexamer acts as an ATP-dependent pump, pulling dsDNA into and through the RuvAB complex. HJ branch migration allows RuvC to scan DNA until it finds its consensus sequence, where it cleaves and resolves the cruciform DNA. The chain is Holliday junction branch migration complex subunit RuvA from Clavibacter michiganensis subsp. michiganensis (strain NCPPB 382).